We begin with the raw amino-acid sequence, 422 residues long: Glutamyl-tRNA reductase (422 aa).

Residues 49–52 (TCNR), serine 107, 112–114 (EPQ), and glutamine 118 contribute to the substrate site. The Nucleophile role is filled by cysteine 50. 187 to 192 (GAGETI) is a binding site for NADP(+).

It belongs to the glutamyl-tRNA reductase family. As to quaternary structure, homodimer.

It catalyses the reaction (S)-4-amino-5-oxopentanoate + tRNA(Glu) + NADP(+) = L-glutamyl-tRNA(Glu) + NADPH + H(+). The protein operates within porphyrin-containing compound metabolism; protoporphyrin-IX biosynthesis; 5-aminolevulinate from L-glutamyl-tRNA(Glu): step 1/2. Functionally, catalyzes the NADPH-dependent reduction of glutamyl-tRNA(Glu) to glutamate 1-semialdehyde (GSA). In Pseudomonas aeruginosa (strain ATCC 15692 / DSM 22644 / CIP 104116 / JCM 14847 / LMG 12228 / 1C / PRS 101 / PAO1), this protein is Glutamyl-tRNA reductase.